Consider the following 984-residue polypeptide: DNA polymerase (984 aa).

A bipartite nuclear localization signal region spans residues 804 to 827 (DNPGKKRKSTDDNEGPSPKRRVIT). The tract at residues 939-948 (CSVKRKRDDD) is monopartite nuclear localization signal. A disordered region spans residues 943-969 (RKRDDDDDNDDDDDDDCDSSDSENDTQ). The span at 947 to 966 (DDDDNDDDDDDDCDSSDSEN) shows a compositional bias: acidic residues.

It belongs to the DNA polymerase type-B family.

It is found in the host nucleus. It carries out the reaction DNA(n) + a 2'-deoxyribonucleoside 5'-triphosphate = DNA(n+1) + diphosphate. In terms of biological role, replicates the viral genome, host DNA polymerases cannot substitute for the viral enzyme in this process. This is DNA polymerase (POL) from Autographa californica nuclear polyhedrosis virus (AcMNPV).